Reading from the N-terminus, the 429-residue chain is Glutamate-1-semialdehyde 2,1-aminomutase 2 (429 aa).

An N6-(pyridoxal phosphate)lysine modification is found at Lys268.

Belongs to the class-III pyridoxal-phosphate-dependent aminotransferase family. HemL subfamily. Homodimer. The cofactor is pyridoxal 5'-phosphate.

The protein localises to the cytoplasm. It carries out the reaction (S)-4-amino-5-oxopentanoate = 5-aminolevulinate. It participates in porphyrin-containing compound metabolism; protoporphyrin-IX biosynthesis; 5-aminolevulinate from L-glutamyl-tRNA(Glu): step 2/2. This Bacillus cereus (strain ATCC 10987 / NRS 248) protein is Glutamate-1-semialdehyde 2,1-aminomutase 2.